The chain runs to 143 residues: Transcription antitermination protein NusB (143 aa).

It belongs to the NusB family.

In terms of biological role, involved in transcription antitermination. Required for transcription of ribosomal RNA (rRNA) genes. Binds specifically to the boxA antiterminator sequence of the ribosomal RNA (rrn) operons. The polypeptide is Transcription antitermination protein NusB (Dehalococcoides mccartyi (strain CBDB1)).